Consider the following 151-residue polypeptide: UPF0178 protein YaiI (151 aa).

The protein belongs to the UPF0178 family.

This chain is UPF0178 protein YaiI, found in Salmonella arizonae (strain ATCC BAA-731 / CDC346-86 / RSK2980).